We begin with the raw amino-acid sequence, 418 residues long: MTLLALGINHKTAPVSLRERVSFSPDKLDQALDSLLAQPMVQGGVVLSTCNRTELYLSVEEQDNLQEALIRWLCDYHNLNEEDLRKSLYWHQDNDAVSHLMRVASGLDSLVLGEPQILGQVKKAFADSQKGHMKASELERMFQKSFSVAKRVRTETDIGASAVSVAFAACTLARQIFESLSTVTVLLVGAGETIELVARHLREHKVQKMIIANRTRERAQILADEVGAEVIALSEIDERLREADIIISSTASPLPIIGKGMVERALKSRRNQPMLLVDIAVPRDVEPEVGKLANAYLYSVDDLQSIISHNLAQRKAAAVEAETIVAQETSEFMAWLRAQSASETIREYRSQAEQVRDELTAKALAALEQGGDAQAIMQDLAWKLTNRLIHAPTKSLQQAARDGDNERLNILRDSLGLE.

Substrate contacts are provided by residues 49–52 (TCNR), Ser109, 114–116 (EPQ), and Gln120. Residue Cys50 is the Nucleophile of the active site. 189-194 (GAGETI) is a binding site for NADP(+).

This sequence belongs to the glutamyl-tRNA reductase family. Homodimer.

It carries out the reaction (S)-4-amino-5-oxopentanoate + tRNA(Glu) + NADP(+) = L-glutamyl-tRNA(Glu) + NADPH + H(+). It participates in porphyrin-containing compound metabolism; protoporphyrin-IX biosynthesis; 5-aminolevulinate from L-glutamyl-tRNA(Glu): step 1/2. In terms of biological role, catalyzes the NADPH-dependent reduction of glutamyl-tRNA(Glu) to glutamate 1-semialdehyde (GSA). The chain is Glutamyl-tRNA reductase from Escherichia coli O9:H4 (strain HS).